The primary structure comprises 153 residues: SsrA-binding protein (153 aa).

Belongs to the SmpB family.

It is found in the cytoplasm. Functionally, required for rescue of stalled ribosomes mediated by trans-translation. Binds to transfer-messenger RNA (tmRNA), required for stable association of tmRNA with ribosomes. tmRNA and SmpB together mimic tRNA shape, replacing the anticodon stem-loop with SmpB. tmRNA is encoded by the ssrA gene; the 2 termini fold to resemble tRNA(Ala) and it encodes a 'tag peptide', a short internal open reading frame. During trans-translation Ala-aminoacylated tmRNA acts like a tRNA, entering the A-site of stalled ribosomes, displacing the stalled mRNA. The ribosome then switches to translate the ORF on the tmRNA; the nascent peptide is terminated with the 'tag peptide' encoded by the tmRNA and targeted for degradation. The ribosome is freed to recommence translation, which seems to be the essential function of trans-translation. The chain is SsrA-binding protein from Sulfurovum sp. (strain NBC37-1).